Consider the following 218-residue polypeptide: Putative glutamine transport system permease protein GlnP (218 aa).

Residues 19–208 (TLVTLKYSII…ILVMLISFIA (190 aa)) enclose the ABC transmembrane type-1 domain. 4 helical membrane-spanning segments follow: residues 25–45 (YSIIAVILGLVIGMLLAICKV), 57–79 (FYTSIFRGTPLLVQLSIIYFAAP), 86–108 (FSVFMAGVISFALNSGAYVSEVI), and 187–207 (FFPMLIAACCYYILVMLISFI).

This sequence belongs to the binding-protein-dependent transport system permease family. HisMQ subfamily.

The protein resides in the cell inner membrane. In terms of biological role, part of the binding-protein-dependent transport system for glutamine; probably responsible for the translocation of the substrate across the membrane. The protein is Putative glutamine transport system permease protein GlnP (glnP) of Rickettsia typhi (strain ATCC VR-144 / Wilmington).